Consider the following 585-residue polypeptide: MRSHYCGALNRSHIGQQVILSGWVHKRRDLGGLIFIDMRDREGIVQVCFDPKYQEALTEASALRNEFCIKIEGEVIARPDNQINKNMATGEVEVVAKALSVYNVSDVLPLDFNQNNTEEQRLKYRYLDLRRPEMAQHLKTRAKITAFVRRYMDENGFLDIETPMLTKATPEGARDYLVPSRVHKGKFYALPQSPQLFKQLLMMSGFDRYYQIVKCFRDEDLRADRQPEFTQIDVETSFMTAPEVREIMEKMVHGLWLNTIGVDLGKFPTMTWQEAMERFGSDKPDLRNPLEIVDVADIVKDIDFNVFSDPANSSNGRVAVIRVPNGINITRKQIDEYTQFVGIYGAKGLAWVKINDINAGLEGVQSPIAKFLTTEKIKAIFDRTSAQSGDILFFGADKWQTATDAMGALRLKLGRDLGLTHLDEWKPLWVIDFPMFERDEEGNLAAMHHPFTSPKDFTPEQLEANPTSAVANAYDMVINGYEVGGGSVRIFDPKMQQTVFHILGIDEDQQREKFGFLLDALKFGTPPHAGLAFGLDRLTMLLTGTDNIRDVIAFPKTTAAACLMTDAPSLANEKALEELAIKTIM.

Glu-171 provides a ligand contact to L-aspartate. The interval 195–198 is aspartate; it reads QLFK. Arg-217 contributes to the L-aspartate binding site. Residues 217–219 and Gln-226 each bind ATP; that span reads RDE. His-448 provides a ligand contact to L-aspartate. Glu-482 serves as a coordination point for ATP. Position 489 (Arg-489) interacts with L-aspartate. 534–537 contacts ATP; the sequence is GLDR.

It belongs to the class-II aminoacyl-tRNA synthetase family. Type 1 subfamily. As to quaternary structure, homodimer.

The protein localises to the cytoplasm. It catalyses the reaction tRNA(Asp) + L-aspartate + ATP = L-aspartyl-tRNA(Asp) + AMP + diphosphate. Its function is as follows. Catalyzes the attachment of L-aspartate to tRNA(Asp) in a two-step reaction: L-aspartate is first activated by ATP to form Asp-AMP and then transferred to the acceptor end of tRNA(Asp). The sequence is that of Aspartate--tRNA ligase from Histophilus somni (strain 129Pt) (Haemophilus somnus).